The chain runs to 359 residues: Non-functional pseudokinase ZRK2 (359 aa).

A compositionally biased stretch (basic residues) spans 1–10 (MKSMVKKLKQ). Residues 1–20 (MKSMVKKLKQSLRSGSLEKR) form a disordered region. The Protein kinase domain occupies 64 to 356 (LKATSNFGSS…KELKQIETLF (293 aa)). ATP-binding positions include 70–78 (FGSSCFVTA) and K97.

It belongs to the protein kinase superfamily. Ser/Thr protein kinase family. ZRK subfamily.

In Arabidopsis thaliana (Mouse-ear cress), this protein is Non-functional pseudokinase ZRK2.